The following is an 88-amino-acid chain: Large ribosomal subunit protein bL27 (88 aa).

The disordered stretch occupies residues 1–25; the sequence is MAHKKGASSSRNGRDSNAQRLGVKR. A compositionally biased stretch (polar residues) spans 7 to 19; sequence ASSSRNGRDSNAQ.

It belongs to the bacterial ribosomal protein bL27 family.

The chain is Large ribosomal subunit protein bL27 from Nocardia farcinica (strain IFM 10152).